The chain runs to 295 residues: Glutamyl-Q tRNA(Asp) synthetase (295 aa).

L-glutamate-binding positions include 5-9 (RFAPS) and E41. The short motif at 8–18 (PSPTGLLHIGS) is the 'HIGH' region element. 4 residues coordinate Zn(2+): C97, C99, Y117, and C121. L-glutamate is bound by residues Y178 and R196. Positions 234 to 238 (KWSKQ) match the 'KMSKS' region motif. K237 provides a ligand contact to ATP.

Belongs to the class-I aminoacyl-tRNA synthetase family. GluQ subfamily. Zn(2+) serves as cofactor.

In terms of biological role, catalyzes the tRNA-independent activation of glutamate in presence of ATP and the subsequent transfer of glutamate onto a tRNA(Asp). Glutamate is transferred on the 2-amino-5-(4,5-dihydroxy-2-cyclopenten-1-yl) moiety of the queuosine in the wobble position of the QUC anticodon. This chain is Glutamyl-Q tRNA(Asp) synthetase, found in Neisseria gonorrhoeae (strain ATCC 700825 / FA 1090).